The primary structure comprises 455 residues: N(5)-hydroxyornithine:cis-anhydromevalonyl coenzyme A-N(5)-transacylase SIDF (455 aa).

Positions 453–455 (PKL) match the PTS1-type peroxisomal targeting signal motif.

It belongs to the lysine N-acyltransferase mbtK family.

Its subcellular location is the peroxisome. It functions in the pathway siderophore biosynthesis. Hydroxyornithine transacylase; part of the gene cluster that mediates the biosynthesis of at least 11 siderophores, including beauverichelin A, dimerumic acid (DA), Na-dimethyl coprogen (NADC), eleutherazine B, ferricrocin (FC), fusarinine A, fusarinine C (FsC), metachelin A, mevalonolactone, rhodotorulic acid (RA) and tenellin. This cocktail of siderophores for iron metabolism is essential for virulence, and more specifically for the fungal virulence in penetrating through the host cuticle. Siderophore synthesis is also involved in conidial germination under iron-deficient conditions. For biosynthesis of fusarinine C, the transacylase SIDF transfers anhydromevalonyl to N(5)-hydroxyornithine. The required anhydromevalonyl-CoA moiety is derived from mevalonate by CoA ligation and dehydration catalyzed by SIDI and sidH respectively. The polypeptide is N(5)-hydroxyornithine:cis-anhydromevalonyl coenzyme A-N(5)-transacylase SIDF (Beauveria bassiana (strain ARSEF 2860) (White muscardine disease fungus)).